The chain runs to 337 residues: Oligopeptide transport ATP-binding protein OppD (337 aa).

Residues 20–269 (LNVKDLRVTF…PVHPYSIGLL (250 aa)) form the ABC transporter domain. An ATP-binding site is contributed by 56-63 (GESGSGKS).

It belongs to the ABC transporter superfamily. The complex is composed of two ATP-binding proteins (OppD and OppF), two transmembrane proteins (OppB and OppC) and a solute-binding protein (OppA or MppA).

The protein localises to the cell inner membrane. The enzyme catalyses a [peptide](out) + ATP + H2O = a [peptide](in) + ADP + phosphate + H(+). It catalyses the reaction L-alanyl-gamma-D-glutamyl-meso-2,6-diaminopimelate(out) + ATP + H2O = L-alanyl-gamma-D-glutamyl-meso-2,6-diaminopimelate(in) + ADP + phosphate + H(+). In terms of biological role, part of the ABC transporter complex OppABCDF involved in the uptake of oligopeptides and of the ABC transporter complex MppA-OppBCDF involved in the uptake of the cell wall murein tripeptide L-alanyl-gamma-D-glutamyl-meso-diaminopimelate. Probably responsible for energy coupling to the transport system. Plays an important nutritional role and is involved in the recycling of cell wall peptides. The sequence is that of Oligopeptide transport ATP-binding protein OppD (oppD) from Escherichia coli (strain K12).